A 374-amino-acid polypeptide reads, in one-letter code: tRNA-specific 2-thiouridylase MnmA (374 aa).

ATP is bound by residues 12 to 19 and Met-38; that span reads GMSGGVDS. The segment at 98–100 is interaction with target base in tRNA; that stretch reads NPD. Cys-103 serves as the catalytic Nucleophile. Residues Cys-103 and Cys-202 are joined by a disulfide bond. Gly-128 provides a ligand contact to ATP. The interaction with tRNA stretch occupies residues 152–154; that stretch reads KDQ. The Cysteine persulfide intermediate role is filled by Cys-202. The interval 316–317 is interaction with tRNA; the sequence is RY.

This sequence belongs to the MnmA/TRMU family.

The protein localises to the cytoplasm. It carries out the reaction S-sulfanyl-L-cysteinyl-[protein] + uridine(34) in tRNA + AH2 + ATP = 2-thiouridine(34) in tRNA + L-cysteinyl-[protein] + A + AMP + diphosphate + H(+). Its function is as follows. Catalyzes the 2-thiolation of uridine at the wobble position (U34) of tRNA, leading to the formation of s(2)U34. This chain is tRNA-specific 2-thiouridylase MnmA, found in Vibrio parahaemolyticus serotype O3:K6 (strain RIMD 2210633).